We begin with the raw amino-acid sequence, 163 residues long: Phosphopantetheine adenylyltransferase (163 aa).

S9 is a substrate binding site. Residues 9–10 and H17 each bind ATP; that span reads SF. Residues K41, I75, and R89 each coordinate substrate. Residues 90-92, E100, and 125-131 each bind ATP; these read GIR and HLYVRSD.

Belongs to the bacterial CoaD family. As to quaternary structure, homohexamer. Mg(2+) serves as cofactor.

It is found in the cytoplasm. The catalysed reaction is (R)-4'-phosphopantetheine + ATP + H(+) = 3'-dephospho-CoA + diphosphate. It functions in the pathway cofactor biosynthesis; coenzyme A biosynthesis; CoA from (R)-pantothenate: step 4/5. Functionally, reversibly transfers an adenylyl group from ATP to 4'-phosphopantetheine, yielding dephospho-CoA (dPCoA) and pyrophosphate. This chain is Phosphopantetheine adenylyltransferase, found in Borrelia garinii subsp. bavariensis (strain ATCC BAA-2496 / DSM 23469 / PBi) (Borreliella bavariensis).